A 189-amino-acid polypeptide reads, in one-letter code: Glutathione-dependent formaldehyde-activating enzyme (189 aa).

The region spanning phenylalanine 20–aspartate 167 is the CENP-V/GFA domain. The Zn(2+) site is built by cysteine 27, cysteine 29, cysteine 48, cysteine 50, cysteine 53, cysteine 95, and cysteine 98.

The protein belongs to the Gfa family. It depends on Zn(2+) as a cofactor.

It carries out the reaction S-(hydroxymethyl)glutathione = glutathione + formaldehyde. It participates in one-carbon metabolism; formaldehyde degradation; formate from formaldehyde (glutathione route): step 1/3. Catalyzes the condensation of formaldehyde and glutathione to S-hydroxymethylglutathione. The chain is Glutathione-dependent formaldehyde-activating enzyme from Rhodopseudomonas palustris (strain BisB18).